A 453-amino-acid polypeptide reads, in one-letter code: MKETILEKIVKNKYEWIKFRKKKQPLITFKNHINTKTRNFYNSLKEKNPVFILECKKKSPSLGIIKKNFNLIDIAKIYNKYASAISVLTDEKYFDGKLEFINIVRERVSQPILCKDFFIDPFQIYLARYYNADAILLMLSILDDFQYQKLSKIAKELNMGILTEVNNTSELKRAIKLNANIIGINNRNLHDLSINLNRTRILSSLIPKNIIIISESGITKYKQIRYLSQFVNGFLIGSHLMSEKQLEIGVRSLILGENKICGLTRSCDIEIAEKYGAVYGGLIFAPSSLRKISKNTAKKIIFNNTLRNVGVFQNENIEIVKNIAEELNLYAVQLHGQEDQKYVKKLRQTLSINIQIWKAFSIDSKIPDLNWDHIHKYVLDSQFGGSNKCFNWSILKHQILENVILAGGINSNNCIKASKLNCSGLDLNSGIEVSPGIKDHKKIKSVFQKLRYY.

The interval 1 to 257 (MKETILEKIV…IGVRSLILGE (257 aa)) is indole-3-glycerol phosphate synthase. Residues 258-453 (NKICGLTRSC…KSVFQKLRYY (196 aa)) are N-(5'-phosphoribosyl)anthranilate isomerase.

The protein in the N-terminal section; belongs to the TrpC family. This sequence in the C-terminal section; belongs to the TrpF family.

It catalyses the reaction N-(5-phospho-beta-D-ribosyl)anthranilate = 1-(2-carboxyphenylamino)-1-deoxy-D-ribulose 5-phosphate. It carries out the reaction 1-(2-carboxyphenylamino)-1-deoxy-D-ribulose 5-phosphate + H(+) = (1S,2R)-1-C-(indol-3-yl)glycerol 3-phosphate + CO2 + H2O. It functions in the pathway amino-acid biosynthesis; L-tryptophan biosynthesis; L-tryptophan from chorismate: step 3/5. The protein operates within amino-acid biosynthesis; L-tryptophan biosynthesis; L-tryptophan from chorismate: step 4/5. Its function is as follows. Bifunctional enzyme that catalyzes two sequential steps of tryptophan biosynthetic pathway. The first reaction is catalyzed by the isomerase, coded by the TrpF domain; the second reaction is catalyzed by the synthase, coded by the TrpC domain. The protein is Tryptophan biosynthesis protein TrpCF (trpC) of Buchnera aphidicola subsp. Diuraphis noxia.